Here is an 87-residue protein sequence, read N- to C-terminus: Small ribosomal subunit protein uS17 (87 aa).

Belongs to the universal ribosomal protein uS17 family. Part of the 30S ribosomal subunit.

Functionally, one of the primary rRNA binding proteins, it binds specifically to the 5'-end of 16S ribosomal RNA. This is Small ribosomal subunit protein uS17 from Onion yellows phytoplasma (strain OY-M).